We begin with the raw amino-acid sequence, 438 residues long: Transmembrane protein 184C (438 aa).

Transmembrane regions (helical) follow at residues 17–37 (LAVV…VWEL), 48–68 (AWFI…WVIL), 86–106 (ILWM…YPSI), 176–196 (VLQY…CELL), 212–232 (YLVI…LLFY), 254–274 (VVFV…VGVI), and 287–307 (AVAT…AAIA). The disordered stretch occupies residues 358–438 (PRKKFFPEDQ…EEPSEKPVAS (81 aa)). Composition is skewed to low complexity over residues 374-390 (SLLS…ASSV) and 404-413 (TVTPQTTPTT). Positions 426-438 (GVREEPSEKPVAS) are enriched in basic and acidic residues.

The protein belongs to the TMEM184 family.

The protein resides in the membrane. Its function is as follows. Possible tumor suppressor which may play a role in cell growth. The chain is Transmembrane protein 184C (TMEM184C) from Bos taurus (Bovine).